The following is a 265-amino-acid chain: Mlc titration factor A (265 aa).

Zn(2+) contacts are provided by H111, H148, H152, and E211.

The protein belongs to the MtfA family. As to quaternary structure, interacts with Mlc. Requires Zn(2+) as cofactor.

The protein resides in the cytoplasm. Functionally, involved in the modulation of the activity of the glucose-phosphotransferase system (glucose-PTS). Interacts with the transcriptional repressor Mlc, preventing its interaction with DNA and leading to the modulation of expression of genes regulated by Mlc, including ptsG, which encodes the PTS system glucose-specific EIICB component. Its function is as follows. Shows zinc-dependent metallopeptidase activity. The polypeptide is Mlc titration factor A (Escherichia coli O6:K15:H31 (strain 536 / UPEC)).